We begin with the raw amino-acid sequence, 181 residues long: MILSDWDIRVYIEKKLLIIDPLFDDTVRENGVDLRFGDEFCRFKRENSVVDTSRDGVDNVLECYRVRGDGFVINPLEHVLTTTLEYVEFPHDLVGLVNLRSTFARFGLYIPPTVIDAGFKGNITIELVGSTVPVKVYPGQRFLHLILARTSSPVYKPYTGKYQGQRGVTPPKLDNSSSKNF.

Residues 100–105 (RSTFAR) and D116 contribute to the dCTP site. Residue E126 is the Proton donor/acceptor of the active site. The dCTP site is built by Y158 and Q165. Positions 160-181 (GKYQGQRGVTPPKLDNSSSKNF) are disordered.

This sequence belongs to the dCTP deaminase family. Homotrimer.

The catalysed reaction is dCTP + H2O + H(+) = dUTP + NH4(+). It participates in pyrimidine metabolism; dUMP biosynthesis; dUMP from dCTP (dUTP route): step 1/2. In terms of biological role, catalyzes the deamination of dCTP to dUTP. This is dCTP deaminase from Desulfurococcus amylolyticus (strain DSM 18924 / JCM 16383 / VKM B-2413 / 1221n) (Desulfurococcus kamchatkensis).